A 195-amino-acid polypeptide reads, in one-letter code: GTP-dependent dephospho-CoA kinase (195 aa).

Residues aspartate 49, valine 50, aspartate 68, glutamate 127, and aspartate 150 each coordinate GTP.

It belongs to the GTP-dependent DPCK family.

It carries out the reaction 3'-dephospho-CoA + GTP = GDP + CoA + H(+). It participates in cofactor biosynthesis; coenzyme A biosynthesis. Functionally, catalyzes the GTP-dependent phosphorylation of the 3'-hydroxyl group of dephosphocoenzyme A to form coenzyme A (CoA). This chain is GTP-dependent dephospho-CoA kinase, found in Methanosarcina mazei (strain ATCC BAA-159 / DSM 3647 / Goe1 / Go1 / JCM 11833 / OCM 88) (Methanosarcina frisia).